The sequence spans 263 residues: MEESEYESVLCVKPEVHVYRIPPRATNRGYRASEWQLDQPSWSGRLRITAKGKVAYIKLEDRTSGELFAQAPVDQFPGTAVESVTDSSRYFVIRIEDGNGRRAFIGIGFGDRGDAFDFNVALQDHFKWVKQQCEFAKQAQNPDEGPKLDLGFKEGQTIKINIANMRKKEGAAGAPRTRPASAGGLSLLPPPPGGKMSTLIPPSGEQFSGGSLVQPVSGSGGATELWPQSKPAAAATADIWGDFTKSTGSPSSQSQPGTGWVQF.

2 disordered regions span residues 167-191 (KKEG…LPPP) and 209-263 (GGSL…WVQF). Residue S181 is modified to Phosphoserine. Short sequence motifs (WXXF motif) lie at residues 218–221 (GSGG) and 238–241 (DIWG). A compositionally biased stretch (low complexity) spans 246-263 (STGSPSSQSQPGTGWVQF).

It belongs to the NECAP family. As to quaternary structure, interacts with AP1G1 and AP2A1 components of the adapter protein complexes AP-1 and AP-2. Interacts with the GAE domain proteins GGA1, GGA2 and GGA3. As to expression, expressed in brain, heart, kidney, liver and lung (at protein level).

It localises to the cytoplasmic vesicle. Its subcellular location is the clathrin-coated vesicle membrane. It is found in the cell membrane. In terms of biological role, involved in endocytosis. In Rattus norvegicus (Rat), this protein is Adaptin ear-binding coat-associated protein 2 (Necap2).